The following is a 709-amino-acid chain: MEMNQQHNEGNESFVALMNGFAGDGTATLPNDGEQRMSIPARELFAAIEADSGLLPVNSSNTNEKRKRRLQRLTGKQSEVLEGFFSICGHPDDGQKRHLSETTGLGLDQVKFWFQNKRTQVKTMCWKEENYKLSVENEILRDENRRVKIAHCTAVCLTCCNSSVQNQLAVEMERLMGQSEWLQQEIARSNGTPPAANLAFQLNSSADYVFSGQHDQQMIAELAKNAMHALIILAESHVALWFPVPGCSYEVLNKMAYDQAYPGDNSANAIGFKTEATRAVSMVMMDYKSVVDFLMDPYNYRTFFPEVISGAVTNRIYTWPTSDGYNGVIQLMTVEMMFPSPLVPARKCTFLRYCNVLNEGLVVVIDVSLDDGSIFSKCRKMPSGFLIQSIRPNSCKVTAIEHVLADDTGVHELYQPCMNGLVFGARRWVATMARQSARMRDVHHNKTAPQVSTKGRKNLMKLADDLLASFAGGIAATGGGTWTVVIGAGTEKDIRVAYRRTTEGSSSYNAILSVTASLRLPLPMRKTFDLLRNLTHRCKWDVLVHGSVVKEEVTIARGVGNDDTVTVLHCKRAGREDRGRTMILQNNGYDASGSFMVYSQIDSELMNTMVLSPSDLPPGRGGPSLYPTGFSLLPDVEAAQDSSGIALGEVGGTLMTMGFQIPVKLASGDRMYSRSAASAIRLMTDTIALVKKTLMNEHSGIYGVSPFHP.

Positions 66–125 (RKRRLQRLTGKQSEVLEGFFSICGHPDDGQKRHLSETTGLGLDQVKFWFQNKRTQVKTMC) form a DNA-binding region, homeobox. The stretch at 166–187 (NQLAVEMERLMGQSEWLQQEIA) forms a coiled coil. One can recognise an START domain in the interval 212 to 441 (GQHDQQMIAE…MARQSARMRD (230 aa)).

Belongs to the HD-ZIP homeobox family. Class IV subfamily.

The protein localises to the nucleus. Probable transcription factor. In Oryza sativa subsp. japonica (Rice), this protein is Homeobox-leucine zipper protein TF1 (TF1).